Consider the following 373-residue polypeptide: Outer membrane protein assembly factor BamC (373 aa).

An N-terminal signal peptide occupies residues 1-16 (MLKQVTPLVLIAAVTA). Cys-17 is lipidated: N-palmitoyl cysteine. Residue Cys-17 is the site of S-diacylglycerol cysteine attachment.

This sequence belongs to the BamC family. As to quaternary structure, part of the Bam complex.

The protein resides in the cell outer membrane. Its function is as follows. Part of the outer membrane protein assembly complex, which is involved in assembly and insertion of beta-barrel proteins into the outer membrane. In Shewanella sediminis (strain HAW-EB3), this protein is Outer membrane protein assembly factor BamC.